We begin with the raw amino-acid sequence, 335 residues long: N-acetyl-gamma-glutamyl-phosphate reductase (335 aa).

Cys-155 is a catalytic residue.

Belongs to the NAGSA dehydrogenase family. Type 1 subfamily.

Its subcellular location is the cytoplasm. It catalyses the reaction N-acetyl-L-glutamate 5-semialdehyde + phosphate + NADP(+) = N-acetyl-L-glutamyl 5-phosphate + NADPH + H(+). The protein operates within amino-acid biosynthesis; L-arginine biosynthesis; N(2)-acetyl-L-ornithine from L-glutamate: step 3/4. Its function is as follows. Catalyzes the NADPH-dependent reduction of N-acetyl-5-glutamyl phosphate to yield N-acetyl-L-glutamate 5-semialdehyde. In Pasteurella multocida (strain Pm70), this protein is N-acetyl-gamma-glutamyl-phosphate reductase.